The primary structure comprises 348 residues: Dihydroorotate dehydrogenase (quinone) (348 aa).

FMN is bound by residues A65–K69 and T89. K69 is a substrate binding site. Residue N114–F118 coordinates substrate. N143 and N176 together coordinate FMN. N176 is a binding site for substrate. S179 functions as the Nucleophile in the catalytic mechanism. N181 contributes to the substrate binding site. Residues K221 and T249 each contribute to the FMN site. Position 250 to 251 (N250 to T251) interacts with substrate. Residues G272, G301, and Y322–T323 each bind FMN.

It belongs to the dihydroorotate dehydrogenase family. Type 2 subfamily. In terms of assembly, monomer. FMN serves as cofactor.

The protein resides in the cell membrane. It carries out the reaction (S)-dihydroorotate + a quinone = orotate + a quinol. It functions in the pathway pyrimidine metabolism; UMP biosynthesis via de novo pathway; orotate from (S)-dihydroorotate (quinone route): step 1/1. Catalyzes the conversion of dihydroorotate to orotate with quinone as electron acceptor. The chain is Dihydroorotate dehydrogenase (quinone) from Akkermansia muciniphila (strain ATCC BAA-835 / DSM 22959 / JCM 33894 / BCRC 81048 / CCUG 64013 / CIP 107961 / Muc).